Reading from the N-terminus, the 441-residue chain is Ribosomal protein uS12 methylthiotransferase RimO (441 aa).

Positions proline 8–proline 118 constitute an MTTase N-terminal domain. 6 residues coordinate [4Fe-4S] cluster: cysteine 17, cysteine 53, cysteine 82, cysteine 150, cysteine 154, and cysteine 157. Residues leucine 136–glutamate 373 enclose the Radical SAM core domain. Positions glutamine 376–valine 441 constitute a TRAM domain.

It belongs to the methylthiotransferase family. RimO subfamily. It depends on [4Fe-4S] cluster as a cofactor.

The protein localises to the cytoplasm. The enzyme catalyses L-aspartate(89)-[ribosomal protein uS12]-hydrogen + (sulfur carrier)-SH + AH2 + 2 S-adenosyl-L-methionine = 3-methylsulfanyl-L-aspartate(89)-[ribosomal protein uS12]-hydrogen + (sulfur carrier)-H + 5'-deoxyadenosine + L-methionine + A + S-adenosyl-L-homocysteine + 2 H(+). In terms of biological role, catalyzes the methylthiolation of an aspartic acid residue of ribosomal protein uS12. The chain is Ribosomal protein uS12 methylthiotransferase RimO from Shigella boydii serotype 18 (strain CDC 3083-94 / BS512).